A 445-amino-acid polypeptide reads, in one-letter code: Coronin-A (445 aa).

WD repeat units lie at residues 77–117 (GHKS…LTDS), 127–167 (GHKR…NLTT), 170–209 (GHSD…IVNE), and 259–299 (DSAS…PYIH). Residues 410 to 444 (KNEKELREEYEKLKIRVAYLESEIVKKDAKIKELT) are a coiled coil.

It belongs to the WD repeat coronin family. In terms of assembly, binds to F-actin.

It is found in the cell surface. Functionally, required for normal motility. Participates in cytokinesis. The protein is Coronin-A (corA) of Dictyostelium discoideum (Social amoeba).